Reading from the N-terminus, the 109-residue chain is Iron-sulfur cluster assembly protein CyaY (109 aa).

Belongs to the frataxin family.

Functionally, involved in iron-sulfur (Fe-S) cluster assembly. May act as a regulator of Fe-S biogenesis. This chain is Iron-sulfur cluster assembly protein CyaY, found in Shewanella putrefaciens (strain CN-32 / ATCC BAA-453).